The primary structure comprises 2170 residues: Supervillin (2170 aa).

The segment at 1–167 is interaction with MYLK; that stretch reads MKRKERIARR…NSRHSRTESG (167 aa). Disordered stretches follow at residues 37-94, 107-327, 413-444, 511-546, and 567-643; these read EDTP…HSLE, RRRQ…QSES, PEPL…NKDL, DYTG…GAEA, and RASK…EDEE. The residue at position 50 (serine 50) is a Phosphoserine. Composition is skewed to polar residues over residues 63–73 and 81–90; these read PGSSLEKQTPS and GIHSSGSMDT. Residues 134 to 166 are compositionally biased toward basic and acidic residues; sequence SRKDPDVTERRGKSDKQEEQSKDANSRHSRTES. Polar residues predominate over residues 167 to 195; sequence GPRTSLVASQDCTPLGSNMSDQEQLLNVE. A phosphoserine mark is found at serine 220, serine 227, and serine 241. Residues 230–241 are compositionally biased toward polar residues; it reads QIPSSPLQQPAS. 2 stretches are compositionally biased toward basic and acidic residues: residues 261 to 272 and 286 to 297; these read PTHEWFLQRDSE and KVREKLVKEESA. Polar residues predominate over residues 298 to 313; the sequence is RSSPELTSESLTQRRQ. Serine 299 and serine 300 each carry phosphoserine. Positions 427–444 are enriched in basic and acidic residues; the sequence is EDDRLVRGHKDPSGNKDL. Composition is skewed to basic and acidic residues over residues 570-582 and 606-615; these read KKPE…ERSA and ESRKTSERFR. Residues serine 632, serine 666, serine 728, and serine 761 each carry the phosphoserine modification. A disordered region spans residues 743 to 771; the sequence is ASAHQKALARDQANEGRESAEPGEPDSST. Basic and acidic residues predominate over residues 750–762; that stretch reads LARDQANEGRESA. Tyrosine 809 carries the phosphotyrosine modification. The residue at position 811 (threonine 811) is a Phosphothreonine. Serine 857, serine 877, and serine 881 each carry phosphoserine. The segment at 887–909 is disordered; it reads AWRPLVEHSGSKGMPGESGKTES. 4 positions are modified to phosphoserine: serine 960, serine 1011, serine 1031, and serine 1077. Positions 1117 to 1137 are disordered; that stretch reads HTQEVEQSLKKKRVTESRESQ. Basic and acidic residues predominate over residues 1119–1137; that stretch reads QEVEQSLKKKRVTESRESQ. The residue at position 1159 (arginine 1159) is an Omega-N-methylarginine. A phosphoserine mark is found at serine 1181 and serine 1184. A Phosphothreonine modification is found at threonine 1186. Phosphoserine is present on residues serine 1190, serine 1278, and serine 1361. The segment at 1375–1643 is interaction with NEB; it reads SNINLRSVNL…KFLDWTELKR (269 aa). 5 Gelsolin-like repeats span residues 1397-1496, 1516-1638, 1708-1818, 1837-1938, and 1971-2078; these read KKLM…LGGQ, IETN…FLDW, VSVD…FQGG, WRLY…LGRR, and ATEF…FPSW. The region spanning 2107–2170 is the HP domain; the sequence is KLCKTIYPLA…VNLKKSKGLF (64 aa).

The protein belongs to the villin/gelsolin family. In terms of assembly, associates with F-actin. Interacts with NEB. Interacts with MYH9. Interacts with MYLK. Interacts with TASOR. Interacts with TRIP6. Interacts with DYNLT1. Interacts with KIF14; at midbody during cytokinesis. As to expression, expressed in the heart, tongue and granular cells within the cerebellum.

It localises to the cell membrane. Its subcellular location is the cytoplasm. It is found in the cytoskeleton. The protein resides in the cell projection. The protein localises to the invadopodium. It localises to the podosome. Its subcellular location is the midbody. It is found in the cleavage furrow. Functionally, forms a high-affinity link between the actin cytoskeleton and the membrane. Is among the first costameric proteins to assemble during myogenesis and it contributes to myogenic membrane structure and differentiation. Appears to be involved in myosin II assembly. May modulate myosin II regulation through MLCK during cell spreading, an initial step in cell migration. May play a role in invadopodial function. Its function is as follows. May be involved in modulation of focal adhesions. Supervillin-mediated down-regulation of focal adhesions involves binding to TRIP6. Plays a role in cytokinesis through KIF14 interaction. This Mus musculus (Mouse) protein is Supervillin (Svil).